A 123-amino-acid polypeptide reads, in one-letter code: MARIAGVDLPREKRVEVGLTYIYGIGLPTAQKILARTGVNPETRIRDLSEEEVNRLREVIDKEIKVEGDLRREVSLNIKRLMEIGCYRGLRHRRGLPVRGQRTKTNARTRKGPIKTVGAKRKK.

The interval 95-123 (GLPVRGQRTKTNARTRKGPIKTVGAKRKK) is disordered.

This sequence belongs to the universal ribosomal protein uS13 family. Part of the 30S ribosomal subunit. Forms a loose heterodimer with protein S19. Forms two bridges to the 50S subunit in the 70S ribosome.

In terms of biological role, located at the top of the head of the 30S subunit, it contacts several helices of the 16S rRNA. In the 70S ribosome it contacts the 23S rRNA (bridge B1a) and protein L5 of the 50S subunit (bridge B1b), connecting the 2 subunits; these bridges are implicated in subunit movement. Contacts the tRNAs in the A and P-sites. The protein is Small ribosomal subunit protein uS13 of Desulfitobacterium hafniense (strain DSM 10664 / DCB-2).